Here is a 407-residue protein sequence, read N- to C-terminus: Cysteine desulfurase (407 aa).

Lys226 is modified (N6-(pyridoxal phosphate)lysine). The Cysteine persulfide intermediate role is filled by Cys364.

The protein belongs to the class-V pyridoxal-phosphate-dependent aminotransferase family. Csd subfamily. As to quaternary structure, homodimer. Interacts with SufE and the SufBCD complex composed of SufB, SufC and SufD. The interaction with SufE is required to mediate the direct transfer of the sulfur atom from the S-sulfanylcysteine. Requires pyridoxal 5'-phosphate as cofactor.

It is found in the cytoplasm. It catalyses the reaction (sulfur carrier)-H + L-cysteine = (sulfur carrier)-SH + L-alanine. The enzyme catalyses L-selenocysteine + AH2 = hydrogenselenide + L-alanine + A + H(+). The protein operates within cofactor biosynthesis; iron-sulfur cluster biosynthesis. In terms of biological role, cysteine desulfurases mobilize the sulfur from L-cysteine to yield L-alanine, an essential step in sulfur metabolism for biosynthesis of a variety of sulfur-containing biomolecules. Component of the suf operon, which is activated and required under specific conditions such as oxidative stress and iron limitation. Acts as a potent selenocysteine lyase in vitro, that mobilizes selenium from L-selenocysteine. Selenocysteine lyase activity is however unsure in vivo. The polypeptide is Cysteine desulfurase (Pectobacterium carotovorum subsp. carotovorum (strain PC1)).